A 673-amino-acid polypeptide reads, in one-letter code: UvrABC system protein B (673 aa).

One can recognise a Helicase ATP-binding domain in the interval 26-183 (EGLEDGLAHQ…RRLAELQYAR (158 aa)). 39 to 46 (GVTGSGKT) contributes to the ATP binding site. The Beta-hairpin signature appears at 92 to 115 (YYDYYQPEAYVPSSDTFIEKDASV). Residues 431–597 (QVDDLLSEIR…GLNKKVVDIL (167 aa)) form the Helicase C-terminal domain. Residues 608 to 627 (AKGRGKSRPIVEPDNVPMDM) form a disordered region. The region spanning 633–668 (QQKIHELEGLMMQHAQNLEFEEAAQIRDQLHQLRDL) is the UVR domain.

Belongs to the UvrB family. Forms a heterotetramer with UvrA during the search for lesions. Interacts with UvrC in an incision complex.

The protein resides in the cytoplasm. The UvrABC repair system catalyzes the recognition and processing of DNA lesions. A damage recognition complex composed of 2 UvrA and 2 UvrB subunits scans DNA for abnormalities. Upon binding of the UvrA(2)B(2) complex to a putative damaged site, the DNA wraps around one UvrB monomer. DNA wrap is dependent on ATP binding by UvrB and probably causes local melting of the DNA helix, facilitating insertion of UvrB beta-hairpin between the DNA strands. Then UvrB probes one DNA strand for the presence of a lesion. If a lesion is found the UvrA subunits dissociate and the UvrB-DNA preincision complex is formed. This complex is subsequently bound by UvrC and the second UvrB is released. If no lesion is found, the DNA wraps around the other UvrB subunit that will check the other stand for damage. The sequence is that of UvrABC system protein B from Escherichia coli O7:K1 (strain IAI39 / ExPEC).